The following is a 786-amino-acid chain: Pentatricopeptide repeat-containing protein 10, chloroplastic (786 aa).

The interval M1–F71 is disordered. A chloroplast-targeting transit peptide spans M1–L95. Residues P27–S36 show a composition bias toward pro residues. Positions S37–P50 are enriched in low complexity. 18 PPR repeats span residues D137–P167, D173–P207, T208–P243, D244–P278, C279–P313, D314–P348, N349–P383, N384–P418, N419–L453, S454–P488, C489–P523, N524–F558, S560–P594, D595–P629, D630–K664, D666–P700, C701–P735, and M736–F770.

It belongs to the PPR family. P subfamily. Forms homodimers.

It is found in the plastid. The protein resides in the chloroplast stroma. Involved in chloroplast mRNA stability. Binds specifically to two intergenic RNA regions of similar sequence located in the chloroplast atpH 5'-UTR and psaJ 3'-UTR, and serves as a barrier to RNA decay. Binding to a specific site in the intergenic region of the chloroplast atpH is sufficient to block 5'-3' and 3'-5' exonucleases. Acts as a protein barrier to block mRNA degradation by exonucleases, and defines processed mRNA termini in chloroplasts. Remodels the structure of the atpH ribosome-binding site in a manner that can account for its ability to enhance translation. Stabilizes a RNA 3'-end downstream from psaI. Binds atpH RNA as a monomer. The sequence is that of Pentatricopeptide repeat-containing protein 10, chloroplastic from Zea mays (Maize).